We begin with the raw amino-acid sequence, 273 residues long: Octanoyl-[GcvH]:protein N-octanoyltransferase (273 aa).

One can recognise a BPL/LPL catalytic domain in the interval 40–245; sequence ATEGAAIRSW…SLMELGATLT (206 aa). Cys144 acts as the Acyl-thioester intermediate in catalysis.

The protein belongs to the octanoyltransferase LipL family.

It catalyses the reaction N(6)-octanoyl-L-lysyl-[glycine-cleavage complex H protein] + L-lysyl-[lipoyl-carrier protein] = N(6)-octanoyl-L-lysyl-[lipoyl-carrier protein] + L-lysyl-[glycine-cleavage complex H protein]. It participates in protein modification; protein lipoylation via endogenous pathway; protein N(6)-(lipoyl)lysine from octanoyl-[acyl-carrier-protein]. Catalyzes the amidotransfer (transamidation) of the octanoyl moiety from octanoyl-GcvH to the lipoyl domain of the E2 subunit of lipoate-dependent enzymes. This is Octanoyl-[GcvH]:protein N-octanoyltransferase from Exiguobacterium sibiricum (strain DSM 17290 / CCUG 55495 / CIP 109462 / JCM 13490 / 255-15).